The primary structure comprises 235 residues: Proteasome subunit alpha (235 aa).

The protein belongs to the peptidase T1A family. In terms of assembly, the 20S proteasome core is composed of 14 alpha and 14 beta subunits that assemble into four stacked heptameric rings, resulting in a barrel-shaped structure. The two inner rings, each composed of seven catalytic beta subunits, are sandwiched by two outer rings, each composed of seven alpha subunits. The catalytic chamber with the active sites is on the inside of the barrel. Has a gated structure, the ends of the cylinder being occluded by the N-termini of the alpha-subunits. Is capped by the proteasome-associated ATPase, ARC.

It is found in the cytoplasm. The protein operates within protein degradation; proteasomal Pup-dependent pathway. With respect to regulation, the formation of the proteasomal ATPase ARC-20S proteasome complex, likely via the docking of the C-termini of ARC into the intersubunit pockets in the alpha-rings, may trigger opening of the gate for substrate entry. Interconversion between the open-gate and close-gate conformations leads to a dynamic regulation of the 20S proteasome proteolysis activity. In terms of biological role, component of the proteasome core, a large protease complex with broad specificity involved in protein degradation. This Arthrobacter sp. (strain FB24) protein is Proteasome subunit alpha.